The following is a 3001-amino-acid chain: BEACH domain-containing protein C2 (3001 aa).

Disordered stretches follow at residues aspartate 43–glycine 80, aspartate 103–valine 156, asparagine 1018–serine 1076, threonine 1846–lysine 1868, tyrosine 2039–proline 2071, alanine 2101–asparagine 2132, and asparagine 2193–tryptophan 2212. At serine 48 the chain carries Phosphoserine. Polar residues-rich tracts occupy residues asparagine 57–serine 72, serine 121–aspartate 132, and serine 1037–serine 1050. Over residues leucine 1854–proline 1863 the composition is skewed to pro residues. Residues alanine 2101 to serine 2119 show a composition bias toward basic and acidic residues. The span at arginine 2120–arginine 2129 shows a compositional bias: polar residues. In terms of domain architecture, BEACH-type PH spans glutamate 2151–valine 2260. Basic and acidic residues predominate over residues aspartate 2196 to serine 2211. The 290-residue stretch at glutamine 2275–arginine 2564 folds into the BEACH domain. WD repeat units follow at residues serine 2679 to threonine 2718, glycine 2721 to threonine 2760, glycine 2802 to arginine 2841, leucine 2842 to alanine 2881, and glycine 2953 to valine 2992.

This is BEACH domain-containing protein C2 from Arabidopsis thaliana (Mouse-ear cress).